Here is a 467-residue protein sequence, read N- to C-terminus: Amino-acid permease RocE (467 aa).

Helical transmembrane passes span 21–41 (FMISLGGVIGTGFFLGTGFTI), 47–67 (LGAVLSYLVGGFIMFLTMLCL), 87–107 (FISPAFGFAFGWLYWLGWAVT), 122–142 (WFPHIDVWIWCLVFAALMFIL), 162–182 (ILIILLFIILGGAAMFGLIDL), 207–227 (MLITMITVNFAFQGTELIGVA), 246–266 (VWRTLVFFVLSIIVIAGMIPW), 283–303 (IGIPYAADIMNFVILIALLSV), 336–356 (VPMYSLIVTMAVACLSLLTKF), 361–381 (TVYMVLLSLAGMSAQVGWITI), 409–429 (YPVLPLIGLTLNTVVLISLAF), and 435–455 (IALYCGVPFMIICYIIYHVVI).

This sequence belongs to the amino acid-polyamine-organocation (APC) superfamily. Amino acid transporter (AAT) (TC 2.A.3.1) family.

The protein localises to the cell membrane. In terms of biological role, putative transport protein involved in arginine degradative pathway. Probably transports arginine or ornithine. This Bacillus subtilis (strain 168) protein is Amino-acid permease RocE.